Here is a 218-residue protein sequence, read N- to C-terminus: Mitochondrial fission factor (218 aa).

Residues 1-198 (MAEISRIQYE…ENKERAKREM (198 aa)) are Cytoplasmic-facing. At T89 the chain carries Phosphothreonine. A phosphoserine mark is found at S129, S131, S146, and S171. Positions 167–198 (VDAASLRRQIIKLNRRLQLLEEENKERAKREM) form a coiled coil. A helical; Anchor for type IV membrane protein membrane pass occupies residues 199 to 216 (VMYSITVAFWLLNSWLWF). Residues 217–218 (RR) lie on the Mitochondrial intermembrane side of the membrane.

The protein belongs to the Tango11 family. Homodimer. Interacts with DNM1L. Interacts with C11orf65/MFI; the interaction inhibits MFF interaction with DNM1L.

The protein localises to the mitochondrion outer membrane. The protein resides in the peroxisome. It localises to the cytoplasmic vesicle. It is found in the secretory vesicle. Its subcellular location is the synaptic vesicle. Plays a role in mitochondrial and peroxisomal fission. Promotes the recruitment and association of the fission mediator dynamin-related protein 1 (DNM1L) to the mitochondrial surface. May be involved in regulation of synaptic vesicle membrane dynamics by recruitment of DNM1L to clathrin-containing vesicles. The chain is Mitochondrial fission factor (MFF) from Pongo abelii (Sumatran orangutan).